The sequence spans 1323 residues: DNA-directed RNA polymerase subunit beta' (1323 aa).

Zn(2+) contacts are provided by Cys60, Cys62, Cys75, and Cys78. Residues Asp535, Asp537, and Asp539 each coordinate Mg(2+). Residues Cys894, Cys977, Cys984, and Cys987 each contribute to the Zn(2+) site.

The protein belongs to the RNA polymerase beta' chain family. As to quaternary structure, the RNAP catalytic core consists of 2 alpha, 1 beta, 1 beta' and 1 omega subunit. When a sigma factor is associated with the core the holoenzyme is formed, which can initiate transcription. It depends on Mg(2+) as a cofactor. Requires Zn(2+) as cofactor.

The enzyme catalyses RNA(n) + a ribonucleoside 5'-triphosphate = RNA(n+1) + diphosphate. Its function is as follows. DNA-dependent RNA polymerase catalyzes the transcription of DNA into RNA using the four ribonucleoside triphosphates as substrates. The protein is DNA-directed RNA polymerase subunit beta' of Corynebacterium urealyticum (strain ATCC 43042 / DSM 7109).